Consider the following 842-residue polypeptide: Oligopeptide transporter phomP2' (842 aa).

Residues 1 to 58 (MEADPKVPFTDEMNIQDEHNWESGSWSSSRRSNDSNVTLLSRRSSVEQHEDERQKDSD) form a disordered region. Residues 23-36 (SGSWSSSRRSNDSN) are compositionally biased toward low complexity. Residues asparagine 33 and asparagine 36 are each glycosylated (N-linked (GlcNAc...) asparagine). Residues 44–58 (SSVEQHEDERQKDSD) show a composition bias toward basic and acidic residues. 6 consecutive transmembrane segments (helical) span residues 105–125 (VWLLSTFWVLAGCSISTVYYF), 177–197 (ALVVIAYWGSSYTAYGLGPLS), 210–230 (PWAITFLVTTQLTGYGLVGLY), 268–288 (VFMAIASAAFVYQWLPSFVFP), 315–335 (GFGLMDFSLDWNYVAFLSPLF), and 345–365 (FVGAALAVWITYPVAYFSDAL). Asparagine 386 and asparagine 398 each carry an N-linked (GlcNAc...) asparagine glycan. The next 4 helical transmembrane spans lie at 415 to 435 (AMHFFWGFASASAIVTYAVLF), 478 to 498 (AWYALLLAVCLCLGTIQLYAG), 505 to 525 (WGLQLVVAISALFTLPCGMLF), and 585 to 605 (WELLVAQVYGTLLGPFVNWAV). Gly residues predominate over residues 629-649 (QGLGLGQGGGGGGGGGGGGGQ). The tract at residues 629 to 657 (QGLGLGQGGGGGGGGGGGGGQQQRAAGAH) is disordered. The next 3 membrane-spanning stretches (helical) occupy residues 668-688 (NFFSSSVIWGVMGPARVFGGG), 700-720 (WLLPSGFAVGAAAVLLLWLIH), and 731-751 (WPLHPAIIFHGASLFPVFPTT). Asparagine 752 carries an N-linked (GlcNAc...) asparagine glycan. Residues 784–804 (AGLDCGAQLVQMVLGLAFLVF) form a helical membrane-spanning segment.

The protein belongs to the oligopeptide OPT transporter family.

It is found in the membrane. Oligopeptide transporter; part of the gene cluster that mediates the biosynthesis of the phomopsins, a group of hexapeptide mycotoxins which infects lupins and causes lupinosis disease in livestock. The polypeptide is Oligopeptide transporter phomP2' (Diaporthe leptostromiformis (Lupinosis disease fungus)).